The following is a 618-amino-acid chain: Leucine aminopeptidase 2 (618 aa).

A peptide-binding positions include 140-142 (QCQ) and 272-277 (PYGGME). Position 301 (histidine 301) interacts with Zn(2+). Glutamate 302 (proton acceptor) is an active-site residue. Residues histidine 305 and glutamate 324 each coordinate Zn(2+). Catalysis depends on tyrosine 389, which acts as the Proton donor.

Belongs to the peptidase M1 family. Zn(2+) serves as cofactor.

It is found in the cytoplasm. The protein localises to the nucleus. The catalysed reaction is an epoxide + H2O = an ethanediol. Functionally, aminopeptidase that preferentially cleaves di- and tripeptides. Also has low epoxide hydrolase activity (in vitro). Can hydrolyze the epoxide leukotriene LTA(4) but it forms preferentially 5,6-dihydroxy-7,9,11,14-eicosatetraenoic acid rather than the cytokine leukotriene B(4) as the product compared to the homologous mammalian enzyme (in vitro). The sequence is that of Leucine aminopeptidase 2 from Emericella nidulans (strain FGSC A4 / ATCC 38163 / CBS 112.46 / NRRL 194 / M139) (Aspergillus nidulans).